The following is a 227-amino-acid chain: Ras-related protein Rab-3C (227 aa).

Residues S39, G42, K43, T44, S45, T56, S57, S61, and T62 each coordinate GTP. T44 serves as a coordination point for Mg(2+). A Switch 1 motif is present at residues 53–66 (DSFTSAFVSTVGID). 2 residues coordinate Mg(2+): T62 and D85. T86 is modified (phosphothreonine; by LRRK2). Residues 86-104 (TAGQERYRTITTAYYRGAM) carry the Switch 2 motif. The GTP site is built by G88, N143, K144, D146, A174, and K175. Residues S196 and S198 each carry the phosphoserine modification. Positions 202–227 (DPAITAAKQSTRLKETPPPPQPNCGC) are disordered. Residue T206 is modified to Phosphothreonine. Pro residues predominate over residues 217-227 (TPPPPQPNCGC). S-geranylgeranyl cysteine attachment occurs at residues C225 and C227. The residue at position 227 (C227) is a Cysteine methyl ester.

The protein belongs to the small GTPase superfamily. Rab family. In terms of assembly, interacts with RIMS1, RIMS2, RPH3A and RPH3AL. Interacts with GDI2, CHM and CHML; phosphorylation at Thr-86 disrupts these interactions. Interacts with MADD (via uDENN domain); the GTP-bound form is preferred for interaction. Mg(2+) serves as cofactor. In terms of processing, phosphorylation of Thr-86 in the switch II region by LRRK2 prevents the association of RAB regulatory proteins, including CHM, CHML and RAB GDP dissociation inhibitor GDI2.

The protein localises to the cell membrane. The enzyme catalyses GTP + H2O = GDP + phosphate + H(+). With respect to regulation, regulated by guanine nucleotide exchange factors (GEFs) which promote the exchange of bound GDP for free GTP. Regulated by GTPase activating proteins (GAPs) which increase the GTP hydrolysis activity. Inhibited by GDP dissociation inhibitors (GDIs) which prevent Rab-GDP dissociation. The small GTPases Rab are key regulators of intracellular membrane trafficking, from the formation of transport vesicles to their fusion with membranes. Rabs cycle between an inactive GDP-bound form and an active GTP-bound form that is able to recruit to membranes different sets of downstream effectors directly responsible for vesicle formation, movement, tethering and fusion. In Mus musculus (Mouse), this protein is Ras-related protein Rab-3C.